We begin with the raw amino-acid sequence, 128 residues long: MSNLPNELKYSEEHEWVKVEGDKVRIGITDFAQSELGDIVFVELPEVGDEVEADEPFGSVESVKTVSELYAPVSGKVVEVNEELDDNPEYVNESPYEKAWMIVVEPSDASQVEELMSADEYKEMISEE.

The 83-residue stretch at Lys23–Glu105 folds into the Lipoyl-binding domain. Lys64 bears the N6-lipoyllysine mark.

Belongs to the GcvH family. The glycine cleavage system is composed of four proteins: P, T, L and H. It depends on (R)-lipoate as a cofactor.

Functionally, the glycine cleavage system catalyzes the degradation of glycine. The H protein shuttles the methylamine group of glycine from the P protein to the T protein. Its function is as follows. Is also involved in protein lipoylation via its role as an octanoyl/lipoyl carrier protein intermediate. In Halalkalibacterium halodurans (strain ATCC BAA-125 / DSM 18197 / FERM 7344 / JCM 9153 / C-125) (Bacillus halodurans), this protein is Glycine cleavage system H protein.